A 447-amino-acid chain; its full sequence is 26S proteasome non-ATPase regulatory subunit 12 (447 aa).

The interval 1 to 23 (MTIGLEPAVSSKTKDKMEQDLSP) is disordered. In terms of domain architecture, PCI spans 240–411 (NYIEIARCYL…GIATFTTTND (172 aa)).

This sequence belongs to the proteasome subunit p55 family.

Functionally, acts as a regulatory subunit of the 26S proteasome which is involved in the ATP-dependent degradation of ubiquitinated proteins. This is 26S proteasome non-ATPase regulatory subunit 12 (psmD12) from Dictyostelium discoideum (Social amoeba).